We begin with the raw amino-acid sequence, 330 residues long: Cyclic AMP receptor-like protein E (330 aa).

The Extracellular segment spans residues 1-10 (MLSLSSYVLN). A helical membrane pass occupies residues 11-31 (LVGSILCLIGCLFIIGHFFWI). At 32 to 40 (PLLRTSLSR) the chain is on the cytoplasmic side. Residues 41–61 (IIIYPTFILLLYDMVSFPSFI) form a helical membrane-spanning segment. Topologically, residues 62–85 (SKTADLYIERSTIICNFQEAIIQY) are extracellular. A helical membrane pass occupies residues 86-106 (LILSNFIWSVCISVNLLYLCF). At 107–116 (SPNKNLKKNE) the chain is on the cytoplasmic side. A helical transmembrane segment spans residues 117–137 (LLYHLCSWGIPLIVVVITKIP). Residues 138–156 (NMISDNGNQCRFKSPNYIK) lie on the Extracellular side of the membrane. The helical transmembrane segment at 157 to 177 (FYLETILFIAFMLFNFIVAFI) threads the bilayer. The Cytoplasmic portion of the chain corresponds to 178–213 (TIKHIISGNLRESETTTTSVLFVNEKKITTKKIVWR). The chain crosses the membrane as a helical span at residues 214-234 (LLLYPSILSICYIMTLVLSIY). Residues 235–274 (QFSTESYGSGGAYANSINNKRNDKNTESGNSNNNNNSYIE) lie on the Extracellular side of the membrane. An N-linked (GlcNAc...) asparagine glycan is attached at N269. A helical transmembrane segment spans residues 275 to 295 (ILLYISKAIFLLQGFFNALVY). Residues 296 to 330 (LRSSKLRDRYKKITIFRKIFWRDEADYQSINDGFN) are Cytoplasmic-facing.

The protein belongs to the G-protein coupled receptor 5 family.

It localises to the membrane. Its function is as follows. Receptor for cAMP. The sequence is that of Cyclic AMP receptor-like protein E (crlE) from Dictyostelium discoideum (Social amoeba).